The chain runs to 423 residues: Histidine--tRNA ligase (423 aa).

Belongs to the class-II aminoacyl-tRNA synthetase family. In terms of assembly, homodimer.

The protein localises to the cytoplasm. It carries out the reaction tRNA(His) + L-histidine + ATP = L-histidyl-tRNA(His) + AMP + diphosphate + H(+). This chain is Histidine--tRNA ligase, found in Corynebacterium diphtheriae (strain ATCC 700971 / NCTC 13129 / Biotype gravis).